The chain runs to 176 residues: Disulfide bond formation protein B (176 aa).

Topologically, residues 1-14 (MLQFLNRCSKGRGA) are cytoplasmic. Residues 15-31 (WLLMALTALVLELVALY) form a helical membrane-spanning segment. Residues 32-49 (FQHVMLLQPCVMCIYERA) are Periplasmic-facing. Cys41 and Cys44 are disulfide-bonded. A helical transmembrane segment spans residues 50–65 (ALFGILGASLLGAIAP). The Cytoplasmic portion of the chain corresponds to 66 to 71 (KSPLRY). The chain crosses the membrane as a helical span at residues 72 to 89 (LAIFIWIYSAWKGVQLAW). Residues 90–144 (THTMLQLHPSPFTTCDFFVSFPSWLPLDKWFPAVFVASGDCAVKQWEFLSLEMPQ) are Periplasmic-facing. Residues Cys104 and Cys130 are joined by a disulfide bond. The helical transmembrane segment at 145 to 163 (WLVGIFAAYLFIAILVLIS) threads the bilayer. At 164-176 (QFVKPKRRDLFSR) the chain is on the cytoplasmic side.

The protein belongs to the DsbB family.

It localises to the cell inner membrane. Its function is as follows. Required for disulfide bond formation in some periplasmic proteins. Acts by oxidizing the DsbA protein. The sequence is that of Disulfide bond formation protein B from Yersinia enterocolitica serotype O:8 / biotype 1B (strain NCTC 13174 / 8081).